The primary structure comprises 959 residues: General vesicular transport factor p115 (959 aa).

Positions M1 to K637 are globular head. 12 ARM repeats span residues A20–Q60, A61–P121, N123–V163, M166–E207, N208–G253, Y255–C310, G311–V354, P363–L408, S420–L459, S473–L513, N518–R571, and G573–K630. S50 carries the phosphoserine modification. K202 carries the post-translational modification N6-acetyllysine. A coiled-coil region spans residues E638–L930. Residues S925–I959 are disordered. Residues E935–I959 show a composition bias toward acidic residues. S940 bears the Phosphoserine mark.

It belongs to the VDP/USO1/EDE1 family. In terms of assembly, homodimer. Dimerizes by parallel association of the tails, resulting in an elongated structure with two globular head domains side by side, and a long rod-like tail structure. Interacts with MIF. Interacts with GM130/GOLGA2; interaction is disrupted upon phosphorylation of GM130/GOLGA2 by CDK1 at the onset of mitosis. In terms of processing, phosphorylated in a cell cycle-specific manner; phosphorylated in interphase but not in mitotic cells. Dephosphorylated protein associates with the Golgi membrane; phosphorylation promostes dissociation.

Its subcellular location is the cytoplasm. It localises to the cytosol. The protein localises to the golgi apparatus membrane. Its function is as follows. General vesicular transport factor required for intercisternal transport in the Golgi stack; it is required for transcytotic fusion and/or subsequent binding of the vesicles to the target membrane. May well act as a vesicular anchor by interacting with the target membrane and holding the vesicular and target membranes in proximity. This Rattus norvegicus (Rat) protein is General vesicular transport factor p115 (Uso1).